Here is a 103-residue protein sequence, read N- to C-terminus: Large ribosomal subunit protein bL21 (103 aa).

Belongs to the bacterial ribosomal protein bL21 family. Part of the 50S ribosomal subunit. Contacts protein L20.

Its function is as follows. This protein binds to 23S rRNA in the presence of protein L20. The chain is Large ribosomal subunit protein bL21 from Idiomarina loihiensis (strain ATCC BAA-735 / DSM 15497 / L2-TR).